Reading from the N-terminus, the 147-residue chain is Phosphoribosyl-AMP cyclohydrolase (147 aa).

A Mg(2+)-binding site is contributed by Asp-89. A Zn(2+)-binding site is contributed by Cys-90. Residues Asp-91 and Asp-93 each contribute to the Mg(2+) site. Residues Cys-106 and Cys-113 each contribute to the Zn(2+) site.

Belongs to the PRA-CH family. Homodimer. The cofactor is Mg(2+). Zn(2+) is required as a cofactor.

It is found in the cytoplasm. It catalyses the reaction 1-(5-phospho-beta-D-ribosyl)-5'-AMP + H2O = 1-(5-phospho-beta-D-ribosyl)-5-[(5-phospho-beta-D-ribosylamino)methylideneamino]imidazole-4-carboxamide. It participates in amino-acid biosynthesis; L-histidine biosynthesis; L-histidine from 5-phospho-alpha-D-ribose 1-diphosphate: step 3/9. Its function is as follows. Catalyzes the hydrolysis of the adenine ring of phosphoribosyl-AMP. The protein is Phosphoribosyl-AMP cyclohydrolase of Nitrobacter hamburgensis (strain DSM 10229 / NCIMB 13809 / X14).